Here is an 88-residue protein sequence, read N- to C-terminus: Small ribosomal subunit protein bS20 (88 aa).

The segment at methionine 1–methionine 27 is disordered.

It belongs to the bacterial ribosomal protein bS20 family.

In terms of biological role, binds directly to 16S ribosomal RNA. In Shewanella amazonensis (strain ATCC BAA-1098 / SB2B), this protein is Small ribosomal subunit protein bS20.